Here is a 518-residue protein sequence, read N- to C-terminus: Bifunctional enzyme NanE/NanK (518 aa).

A manNAc-6-P epimerase region spans residues 1–234 (MCRVQGMIEE…DAVESAAKPS (234 aa)). The tract at residues 235–518 (SPVLAFDIGG…VADLAATYFS (284 aa)) is manNAc kinase. ATP-binding positions include 239 to 246 (AFDIGGTK) and 365 to 372 (GIGGGIVL).

The protein in the N-terminal section; belongs to the NanE family. In the C-terminal section; belongs to the ROK (NagC/XylR) family. NanK subfamily.

The catalysed reaction is an N-acyl-D-glucosamine 6-phosphate = an N-acyl-D-mannosamine 6-phosphate. The enzyme catalyses an N-acyl-D-mannosamine + ATP = an N-acyl-D-mannosamine 6-phosphate + ADP + H(+). Its pathway is amino-sugar metabolism; N-acetylneuraminate degradation; D-fructose 6-phosphate from N-acetylneuraminate: step 2/5. The protein operates within amino-sugar metabolism; N-acetylneuraminate degradation; D-fructose 6-phosphate from N-acetylneuraminate: step 3/5. Functionally, converts N-acetylmannosamine-6-phosphate (ManNAc-6-P) to N-acetylglucosamine-6-phosphate (GlcNAc-6-P). In terms of biological role, catalyzes the phosphorylation of N-acetylmannosamine (ManNAc) to ManNAc-6-P. The sequence is that of Bifunctional enzyme NanE/NanK (nanEK) from Brucella melitensis biotype 1 (strain ATCC 23456 / CCUG 17765 / NCTC 10094 / 16M).